The following is a 358-amino-acid chain: MVEINKVAILGAGCWRTHAATGITTFKRACEVADETGIKEAALTHSSVTYAVELKHLAGVDEVVLSDPVFDADGFTVVDIEEDCDVDLDEFIKAHLEGNPEDVMPKLRDYVNDIADDVPKPPKGAIHFLSPEEMEDKLDIVVTTDDAEAVEDADMIISWLPKGGVQPDIFKKIIDDIPEGCIVANTCTIPTRQFKEMFEDMGRDDLQVTSYHPATVPEHKGQVFVAEGYADEEVVEAVYELGEKARGLAFKVPGYLLGPVCDMASAVTAIVYAGLLTFRDACTDILGAPVDFTQNMAVEALQMMAKFMEEEGLDKLEEALDPAALTNTADSMNFGPLADTEILPKALEVLEKYSKKAE.

This sequence belongs to the HMD family. As to quaternary structure, homotetramer.

It carries out the reaction 5,10-methenyl-5,6,7,8-tetrahydromethanopterin + H2 = 5,10-methylenetetrahydromethanopterin + H(+). The protein operates within one-carbon metabolism; methanogenesis from CO(2); 5,10-methylene-5,6,7,8-tetrahydromethanopterin from 5,10-methenyl-5,6,7,8-tetrahydromethanopterin (hydrogen route): step 1/1. Its activity is regulated as follows. Activity requires salt; 100 mM potassium phosphate, potassium chloride, and sodium chloride are equally effective. Its function is as follows. Catalyzes the reversible reduction of methenyl-H(4)MPT(+) to methylene-H(4)MPT. The sequence is that of 5,10-methenyltetrahydromethanopterin hydrogenase from Methanopyrus kandleri (strain AV19 / DSM 6324 / JCM 9639 / NBRC 100938).